A 304-amino-acid chain; its full sequence is ULP1-interacting protein 4 (304 aa).

A disordered region spans residues 72–269; the sequence is DEYPKEVDEH…SIVKEGDANT (198 aa). Residues 73-83 are compositionally biased toward basic and acidic residues; it reads EYPKEVDEHSN. Polar residues predominate over residues 129–149; the sequence is TPSLKGNVTFPSPKTAISQDG. Ser-140 is subject to Phosphoserine. Residues 155 to 183 show a composition bias toward basic and acidic residues; that stretch reads ETTRKERKYEHAPLNEVPVERDPKEENKE. Ser-185 and Ser-205 each carry phosphoserine.

Interacts with ULP1.

Its subcellular location is the endoplasmic reticulum membrane. The protein resides in the mitochondrion outer membrane. The protein localises to the nucleus envelope. The protein is ULP1-interacting protein 4 (UIP4) of Saccharomyces cerevisiae (strain ATCC 204508 / S288c) (Baker's yeast).